The primary structure comprises 95 residues: Glutamyl-tRNA(Gln) amidotransferase subunit C (95 aa).

The protein belongs to the GatC family. In terms of assembly, heterotrimer of A, B and C subunits.

It carries out the reaction L-glutamyl-tRNA(Gln) + L-glutamine + ATP + H2O = L-glutaminyl-tRNA(Gln) + L-glutamate + ADP + phosphate + H(+). The enzyme catalyses L-aspartyl-tRNA(Asn) + L-glutamine + ATP + H2O = L-asparaginyl-tRNA(Asn) + L-glutamate + ADP + phosphate + 2 H(+). In terms of biological role, allows the formation of correctly charged Asn-tRNA(Asn) or Gln-tRNA(Gln) through the transamidation of misacylated Asp-tRNA(Asn) or Glu-tRNA(Gln) in organisms which lack either or both of asparaginyl-tRNA or glutaminyl-tRNA synthetases. The reaction takes place in the presence of glutamine and ATP through an activated phospho-Asp-tRNA(Asn) or phospho-Glu-tRNA(Gln). The polypeptide is Glutamyl-tRNA(Gln) amidotransferase subunit C (Caulobacter vibrioides (strain ATCC 19089 / CIP 103742 / CB 15) (Caulobacter crescentus)).